Reading from the N-terminus, the 239-residue chain is Large ribosomal subunit protein uL1 (239 aa).

The protein belongs to the universal ribosomal protein uL1 family. As to quaternary structure, part of the 50S ribosomal subunit.

Binds directly to 23S rRNA. The L1 stalk is quite mobile in the ribosome, and is involved in E site tRNA release. In terms of biological role, protein L1 is also a translational repressor protein, it controls the translation of the L11 operon by binding to its mRNA. The polypeptide is Large ribosomal subunit protein uL1 (Rickettsia rickettsii (strain Iowa)).